The following is a 357-amino-acid chain: UDP-N-acetylglucosamine--N-acetylmuramyl-(pentapeptide) pyrophosphoryl-undecaprenol N-acetylglucosamine transferase (357 aa).

Residues 12-14 (TGG), Asn-124, Arg-163, Ser-189, Ile-243, 262-267 (ALTVSE), and Gln-288 contribute to the UDP-N-acetyl-alpha-D-glucosamine site.

The protein belongs to the glycosyltransferase 28 family. MurG subfamily.

The protein localises to the cell inner membrane. It carries out the reaction di-trans,octa-cis-undecaprenyl diphospho-N-acetyl-alpha-D-muramoyl-L-alanyl-D-glutamyl-meso-2,6-diaminopimeloyl-D-alanyl-D-alanine + UDP-N-acetyl-alpha-D-glucosamine = di-trans,octa-cis-undecaprenyl diphospho-[N-acetyl-alpha-D-glucosaminyl-(1-&gt;4)]-N-acetyl-alpha-D-muramoyl-L-alanyl-D-glutamyl-meso-2,6-diaminopimeloyl-D-alanyl-D-alanine + UDP + H(+). It participates in cell wall biogenesis; peptidoglycan biosynthesis. In terms of biological role, cell wall formation. Catalyzes the transfer of a GlcNAc subunit on undecaprenyl-pyrophosphoryl-MurNAc-pentapeptide (lipid intermediate I) to form undecaprenyl-pyrophosphoryl-MurNAc-(pentapeptide)GlcNAc (lipid intermediate II). The protein is UDP-N-acetylglucosamine--N-acetylmuramyl-(pentapeptide) pyrophosphoryl-undecaprenol N-acetylglucosamine transferase of Pseudomonas aeruginosa (strain LESB58).